Reading from the N-terminus, the 429-residue chain is Phosphoribosylamine--glycine ligase (429 aa).

Positions 109-316 (KDFLARHNIP…LVELCLAACE (208 aa)) constitute an ATP-grasp domain. 135-196 (LREKGAPIVI…EEFLDGEEAS (62 aa)) lines the ATP pocket. Positions 212–236 (SQDHKRVGDKDTGPNTGGMGAYSPA) are disordered. The span at 213-223 (QDHKRVGDKDT) shows a compositional bias: basic and acidic residues. Glu286 and Asn288 together coordinate Mg(2+).

This sequence belongs to the GARS family. In terms of assembly, monomer. It depends on Mg(2+) as a cofactor. Mn(2+) is required as a cofactor.

The enzyme catalyses 5-phospho-beta-D-ribosylamine + glycine + ATP = N(1)-(5-phospho-beta-D-ribosyl)glycinamide + ADP + phosphate + H(+). It functions in the pathway purine metabolism; IMP biosynthesis via de novo pathway; N(1)-(5-phospho-D-ribosyl)glycinamide from 5-phospho-alpha-D-ribose 1-diphosphate: step 2/2. This chain is Phosphoribosylamine--glycine ligase, found in Escherichia coli O6:H1 (strain CFT073 / ATCC 700928 / UPEC).